A 436-amino-acid chain; its full sequence is 3-ketoacyl-CoA thiolase (436 aa).

Residue Cys99 is the Acyl-thioester intermediate of the active site. Residues His392 and Cys422 each act as proton acceptor in the active site.

This sequence belongs to the thiolase-like superfamily. Thiolase family. In terms of assembly, heterotetramer of two alpha chains (FadJ) and two beta chains (FadI).

The protein resides in the cytoplasm. The catalysed reaction is an acyl-CoA + acetyl-CoA = a 3-oxoacyl-CoA + CoA. Its pathway is lipid metabolism; fatty acid beta-oxidation. Its function is as follows. Catalyzes the final step of fatty acid oxidation in which acetyl-CoA is released and the CoA ester of a fatty acid two carbons shorter is formed. The protein is 3-ketoacyl-CoA thiolase of Shigella flexneri serotype 5b (strain 8401).